Consider the following 196-residue polypeptide: Probable GTP-binding protein EngB (196 aa).

The EngB-type G domain maps to 22–193; the sequence is SLPEVAFVGR…LEEIRKAKGE (172 aa). Residues 30–37, 57–61, 75–78, 142–145, and 172–174 each bind GTP; these read GRSNVGKS, GRTQL, DLPG, TKSD, and FSA. Residues S37 and T59 each contribute to the Mg(2+) site.

This sequence belongs to the TRAFAC class TrmE-Era-EngA-EngB-Septin-like GTPase superfamily. EngB GTPase family. Mg(2+) is required as a cofactor.

Necessary for normal cell division and for the maintenance of normal septation. The protein is Probable GTP-binding protein EngB of Syntrophus aciditrophicus (strain SB).